The sequence spans 100 residues: NADH-quinone oxidoreductase subunit K (100 aa).

3 helical membrane passes run 4-24, 29-49, and 60-80; these read TSYYVLLSAILFTIGVLGVLL, IVVFMAVELMLNAANLALVAF, and VIVFFVITVAAAEVAVGLALL.

The protein belongs to the complex I subunit 4L family. NDH-1 is composed of 14 different subunits. Subunits NuoA, H, J, K, L, M, N constitute the membrane sector of the complex.

The protein localises to the cell membrane. The catalysed reaction is a quinone + NADH + 5 H(+)(in) = a quinol + NAD(+) + 4 H(+)(out). In terms of biological role, NDH-1 shuttles electrons from NADH, via FMN and iron-sulfur (Fe-S) centers, to quinones in the respiratory chain. The immediate electron acceptor for the enzyme in this species is believed to be ubiquinone. Couples the redox reaction to proton translocation (for every two electrons transferred, four hydrogen ions are translocated across the cytoplasmic membrane), and thus conserves the redox energy in a proton gradient. In Chloroflexus aurantiacus (strain ATCC 29366 / DSM 635 / J-10-fl), this protein is NADH-quinone oxidoreductase subunit K.